The primary structure comprises 472 residues: Acetyl-CoA decarbonylase/synthase complex subunit beta 2 (472 aa).

[Ni-Fe-S] cluster contacts are provided by Cys189, Cys192, Cys278, and Cys280.

It belongs to the CdhC family. Monomer. The ACDS complex is made up of alpha, epsilon, beta, gamma and delta chains with a probable stoichiometry of (alpha(2)epsilon(2))(4)-beta(8)-(gamma(1)delta(1))(8) (Potential). [Ni-Fe-S] cluster serves as cofactor.

The catalysed reaction is Co(I)-[corrinoid Fe-S protein] + acetyl-CoA + H(+) = methyl-Co(III)-[corrinoid Fe-S protein] + CO + CoA. It functions in the pathway one-carbon metabolism; methanogenesis from acetate. Its function is as follows. Part of a complex that catalyzes the reversible cleavage of acetyl-CoA, allowing growth on acetate as sole source of carbon and energy. The alpha-epsilon complex generates CO from CO(2), while the beta subunit (this protein) combines the CO with CoA and a methyl group to form acetyl-CoA. The methyl group, which is incorporated into acetyl-CoA, is transferred to the beta subunit by a corrinoid iron-sulfur protein (the gamma-delta complex). In Methanosarcina thermophila, this protein is Acetyl-CoA decarbonylase/synthase complex subunit beta 2 (cdhC2).